Consider the following 217-residue polypeptide: tRNA (guanine-N(7)-)-methyltransferase (217 aa).

Residues glutamate 43, aspartate 68, asparagine 101, and asparagine 123 each contribute to the S-adenosyl-L-methionine site. Lysine 127 contributes to the substrate binding site. The segment at 129–134 (RHNKRR) is interaction with RNA. Substrate-binding positions include aspartate 159 and 196-199 (TEYE).

Belongs to the class I-like SAM-binding methyltransferase superfamily. TrmB family.

The enzyme catalyses guanosine(46) in tRNA + S-adenosyl-L-methionine = N(7)-methylguanosine(46) in tRNA + S-adenosyl-L-homocysteine. Its pathway is tRNA modification; N(7)-methylguanine-tRNA biosynthesis. Its function is as follows. Catalyzes the formation of N(7)-methylguanine at position 46 (m7G46) in tRNA. The protein is tRNA (guanine-N(7)-)-methyltransferase of Clostridium botulinum (strain Langeland / NCTC 10281 / Type F).